The sequence spans 134 residues: Ribonuclease P protein component (134 aa).

The protein belongs to the RnpA family. As to quaternary structure, consists of a catalytic RNA component (M1 or rnpB) and a protein subunit.

It carries out the reaction Endonucleolytic cleavage of RNA, removing 5'-extranucleotides from tRNA precursor.. RNaseP catalyzes the removal of the 5'-leader sequence from pre-tRNA to produce the mature 5'-terminus. It can also cleave other RNA substrates such as 4.5S RNA. The protein component plays an auxiliary but essential role in vivo by binding to the 5'-leader sequence and broadening the substrate specificity of the ribozyme. The polypeptide is Ribonuclease P protein component (Pseudomonas putida (strain ATCC 700007 / DSM 6899 / JCM 31910 / BCRC 17059 / LMG 24140 / F1)).